The primary structure comprises 66 residues: Neurotoxin BmK AGP-SYPU1 (66 aa).

In terms of domain architecture, LCN-type CS-alpha/beta spans 2–64 (RDAYIAQNYN…KPIRIPGKCH (63 aa)). 4 disulfides stabilise this stretch: cysteine 12–cysteine 63, cysteine 16–cysteine 36, cysteine 22–cysteine 46, and cysteine 26–cysteine 48. Residues 65-66 (RR) constitute a propeptide, removed by a carboxypeptidase.

In terms of tissue distribution, expressed by the venom gland.

The protein localises to the secreted. In terms of biological role, alpha toxins bind voltage-independently at site-3 of sodium channels (Nav) and inhibit the inactivation of the activated channels, thereby blocking neuronal transmission. This toxin has a strong analgesic effect when administered to mice by intraperitoneal injection. This is Neurotoxin BmK AGP-SYPU1 from Olivierus martensii (Manchurian scorpion).